A 408-amino-acid chain; its full sequence is 3-hydroxy-3-methylglutaryl-coenzyme A reductase (408 aa).

Catalysis depends on charge relay system residues E101 and D307. The active-site Proton donor is the H403.

Belongs to the HMG-CoA reductase family.

The enzyme catalyses (R)-mevalonate + 2 NADP(+) + CoA = (3S)-3-hydroxy-3-methylglutaryl-CoA + 2 NADPH + 2 H(+). Its pathway is metabolic intermediate biosynthesis; (R)-mevalonate biosynthesis; (R)-mevalonate from acetyl-CoA: step 3/3. Functionally, converts HMG-CoA to mevalonate. This is 3-hydroxy-3-methylglutaryl-coenzyme A reductase (hmgA) from Pyrococcus abyssi (strain GE5 / Orsay).